We begin with the raw amino-acid sequence, 64 residues long: Prokaryotic ubiquitin-like protein Pup (64 aa).

The segment covering 1–10 has biased composition (polar residues); it reads MNQNGSQIHS. Positions 1 to 32 are disordered; the sequence is MNQNGSQIHSDGNGHSDDTDTPGVSAGQVSVN. An ARC ATPase binding region spans residues 20 to 58; sequence DTPGVSAGQVSVNTAGVDDLLDEIDGLLESNAEEFVRSY. At Q64 the chain carries Deamidated glutamine. Q64 is covalently cross-linked (Isoglutamyl lysine isopeptide (Gln-Lys) (interchain with K-? in acceptor proteins)).

Belongs to the prokaryotic ubiquitin-like protein family. As to quaternary structure, strongly interacts with the proteasome-associated ATPase ARC through a hydrophobic interface; the interacting region of Pup lies in its C-terminal half. There is one Pup binding site per ARC hexamer ring. Post-translationally, is modified by deamidation of its C-terminal glutamine to glutamate by the deamidase Dop, a prerequisite to the subsequent pupylation process.

It functions in the pathway protein degradation; proteasomal Pup-dependent pathway. In terms of biological role, protein modifier that is covalently attached to lysine residues of substrate proteins, thereby targeting them for proteasomal degradation. The tagging system is termed pupylation. The polypeptide is Prokaryotic ubiquitin-like protein Pup (Corynebacterium diphtheriae (strain ATCC 700971 / NCTC 13129 / Biotype gravis)).